The primary structure comprises 440 residues: Thymidine phosphorylase (440 aa).

It belongs to the thymidine/pyrimidine-nucleoside phosphorylase family. Homodimer.

It carries out the reaction thymidine + phosphate = 2-deoxy-alpha-D-ribose 1-phosphate + thymine. Its pathway is pyrimidine metabolism; dTMP biosynthesis via salvage pathway; dTMP from thymine: step 1/2. Its function is as follows. The enzymes which catalyze the reversible phosphorolysis of pyrimidine nucleosides are involved in the degradation of these compounds and in their utilization as carbon and energy sources, or in the rescue of pyrimidine bases for nucleotide synthesis. The protein is Thymidine phosphorylase of Escherichia coli (strain K12 / DH10B).